The chain runs to 237 residues: tRNA (guanine-N(7)-)-methyltransferase (237 aa).

Residues E68, E93, D120, and D143 each coordinate S-adenosyl-L-methionine. D143 is an active-site residue. Substrate-binding positions include K147, D179, and T216 to E219.

Belongs to the class I-like SAM-binding methyltransferase superfamily. TrmB family.

The enzyme catalyses guanosine(46) in tRNA + S-adenosyl-L-methionine = N(7)-methylguanosine(46) in tRNA + S-adenosyl-L-homocysteine. The protein operates within tRNA modification; N(7)-methylguanine-tRNA biosynthesis. In terms of biological role, catalyzes the formation of N(7)-methylguanine at position 46 (m7G46) in tRNA. The chain is tRNA (guanine-N(7)-)-methyltransferase from Shewanella halifaxensis (strain HAW-EB4).